The following is a 670-amino-acid chain: UvrABC system protein B (670 aa).

Positions 51 to 433 (EGLKKREQFQ…SARIVEQIIR (383 aa)) constitute a Helicase ATP-binding domain. 64–71 (GVTGSGKT) is an ATP binding site. Positions 117–140 (YYDYYQPESYLPAKDQYIEKDAQI) match the Beta-hairpin motif. In terms of domain architecture, Helicase C-terminal spans 453-612 (DVMQEIRKIV…IVPKTIRKPI (160 aa)). A UVR domain is found at 631–666 (PNVIIELDAEMREAADRLDFERAIQLRELIKKLEKE).

It belongs to the UvrB family. In terms of assembly, forms a heterotetramer with UvrA during the search for lesions. Interacts with UvrC in an incision complex.

It is found in the cytoplasm. The UvrABC repair system catalyzes the recognition and processing of DNA lesions. A damage recognition complex composed of 2 UvrA and 2 UvrB subunits scans DNA for abnormalities. Upon binding of the UvrA(2)B(2) complex to a putative damaged site, the DNA wraps around one UvrB monomer. DNA wrap is dependent on ATP binding by UvrB and probably causes local melting of the DNA helix, facilitating insertion of UvrB beta-hairpin between the DNA strands. Then UvrB probes one DNA strand for the presence of a lesion. If a lesion is found the UvrA subunits dissociate and the UvrB-DNA preincision complex is formed. This complex is subsequently bound by UvrC and the second UvrB is released. If no lesion is found, the DNA wraps around the other UvrB subunit that will check the other stand for damage. This is UvrABC system protein B from Methanosarcina acetivorans (strain ATCC 35395 / DSM 2834 / JCM 12185 / C2A).